The primary structure comprises 232 residues: Phosphatidylserine decarboxylase proenzyme (232 aa).

Ser190 (schiff-base intermediate with substrate; via pyruvic acid) is an active-site residue. Residue Ser190 is modified to Pyruvic acid (Ser); by autocatalysis.

Belongs to the phosphatidylserine decarboxylase family. PSD-A subfamily. Heterodimer of a large membrane-associated beta subunit and a small pyruvoyl-containing alpha subunit. Requires pyruvate as cofactor. Is synthesized initially as an inactive proenzyme. Formation of the active enzyme involves a self-maturation process in which the active site pyruvoyl group is generated from an internal serine residue via an autocatalytic post-translational modification. Two non-identical subunits are generated from the proenzyme in this reaction, and the pyruvate is formed at the N-terminus of the alpha chain, which is derived from the carboxyl end of the proenzyme. The post-translation cleavage follows an unusual pathway, termed non-hydrolytic serinolysis, in which the side chain hydroxyl group of the serine supplies its oxygen atom to form the C-terminus of the beta chain, while the remainder of the serine residue undergoes an oxidative deamination to produce ammonia and the pyruvoyl prosthetic group on the alpha chain.

The protein localises to the cell membrane. The catalysed reaction is a 1,2-diacyl-sn-glycero-3-phospho-L-serine + H(+) = a 1,2-diacyl-sn-glycero-3-phosphoethanolamine + CO2. Its pathway is phospholipid metabolism; phosphatidylethanolamine biosynthesis; phosphatidylethanolamine from CDP-diacylglycerol: step 2/2. Catalyzes the formation of phosphatidylethanolamine (PtdEtn) from phosphatidylserine (PtdSer). This chain is Phosphatidylserine decarboxylase proenzyme, found in Cereibacter sphaeroides (strain ATCC 17025 / ATH 2.4.3) (Rhodobacter sphaeroides).